A 583-amino-acid chain; its full sequence is Thiol:disulfide interchange protein DsbD (583 aa).

A signal peptide spans 1 to 20; sequence MLKRFIFLLVGITLTLSAHA. 2 disulfides stabilise this stretch: C123–C128 and C200–C322. 8 consecutive transmembrane segments (helical) span residues 185–205, 237–257, 261–281, 302–322, 344–364, 375–395, 405–425, and 433–453; these read IFWF…LPML, LTYT…QVAL, PVLI…FGLF, GGAF…ASPC, GLAL…ITLF, WLLK…VFLL, PLMW…VIPT, and VRIV…NLVW. One can recognise a Thioredoxin domain in the interval 440–583; sequence TFAVASYPWA…NQFLNWLNQL (144 aa). C500 and C503 are disulfide-bonded.

Belongs to the thioredoxin family. DsbD subfamily.

The protein resides in the cell inner membrane. It carries out the reaction [protein]-dithiol + NAD(+) = [protein]-disulfide + NADH + H(+). The catalysed reaction is [protein]-dithiol + NADP(+) = [protein]-disulfide + NADPH + H(+). Its function is as follows. Required to facilitate the formation of correct disulfide bonds in some periplasmic proteins and for the assembly of the periplasmic c-type cytochromes. Acts by transferring electrons from cytoplasmic thioredoxin to the periplasm. This transfer involves a cascade of disulfide bond formation and reduction steps. This is Thiol:disulfide interchange protein DsbD from Actinobacillus pleuropneumoniae serotype 5b (strain L20).